The sequence spans 191 residues: Hypoxanthine/guanine phosphoribosyltransferase (191 aa).

It belongs to the purine/pyrimidine phosphoribosyltransferase family. Archaeal HPRT subfamily. As to quaternary structure, homodimer.

It localises to the cytoplasm. It catalyses the reaction IMP + diphosphate = hypoxanthine + 5-phospho-alpha-D-ribose 1-diphosphate. It carries out the reaction GMP + diphosphate = guanine + 5-phospho-alpha-D-ribose 1-diphosphate. Its pathway is purine metabolism; IMP biosynthesis via salvage pathway; IMP from hypoxanthine: step 1/1. Functionally, catalyzes a salvage reaction resulting in the formation of IMP that is energically less costly than de novo synthesis. The polypeptide is Hypoxanthine/guanine phosphoribosyltransferase (Methanocella arvoryzae (strain DSM 22066 / NBRC 105507 / MRE50)).